Reading from the N-terminus, the 162-residue chain is Phosphopantetheine adenylyltransferase (162 aa).

Serine 11 contributes to the substrate binding site. ATP contacts are provided by residues serine 11–phenylalanine 12 and histidine 19. 3 residues coordinate substrate: lysine 43, threonine 75, and arginine 89. ATP contacts are provided by residues glycine 90–arginine 92, glutamate 100, and tyrosine 125–serine 131.

Belongs to the bacterial CoaD family. In terms of assembly, homohexamer. Mg(2+) is required as a cofactor.

The protein localises to the cytoplasm. The catalysed reaction is (R)-4'-phosphopantetheine + ATP + H(+) = 3'-dephospho-CoA + diphosphate. It participates in cofactor biosynthesis; coenzyme A biosynthesis; CoA from (R)-pantothenate: step 4/5. Functionally, reversibly transfers an adenylyl group from ATP to 4'-phosphopantetheine, yielding dephospho-CoA (dPCoA) and pyrophosphate. The protein is Phosphopantetheine adenylyltransferase of Finegoldia magna (strain ATCC 29328 / DSM 20472 / WAL 2508) (Peptostreptococcus magnus).